We begin with the raw amino-acid sequence, 104 residues long: uncharacterized protein (104 aa).

This is an uncharacterized protein from Mycobacterium tuberculosis (strain ATCC 25618 / H37Rv).